Reading from the N-terminus, the 553-residue chain is Sulfatase (553 aa).

Positions 1–25 are cleaved as a signal peptide; that stretch reads MTSEMKKFSKIVLFGLLISPLLASS. The Ca(2+) site is built by Asp43, Asp44, and Cys88. Cys88 serves as the catalytic Nucleophile. Cys88 carries the 3-oxoalanine (Cys) modification. His159 is a catalytic residue. Residues Asp350 and Asn351 each coordinate Ca(2+).

This sequence belongs to the sulfatase family. Requires Ca(2+) as cofactor. In terms of processing, the conversion to 3-oxoalanine (also known as C-formylglycine, FGly), of a serine or cysteine residue in prokaryotes and of a cysteine residue in eukaryotes, is critical for catalytic activity. This post-translational modification is severely defective in multiple sulfatase deficiency (MSD).

Its subcellular location is the secreted. Functionally, sulfatase that may be involved in ulvan degradation. Ulvan is the main polysaccharide component of the Ulvales (green seaweed) cell wall. It is composed of disaccharide building blocks comprising 3-sulfated rhamnose (Rha3S) linked to D-glucuronic acid (GlcA), L-iduronic acid (IduA), or D-xylose (Xyl). The sequence is that of Sulfatase from Formosa agariphila (strain DSM 15362 / KCTC 12365 / LMG 23005 / KMM 3901 / M-2Alg 35-1).